The primary structure comprises 709 residues: Methylmalonyl-CoA mutase (709 aa).

Residues 73-77, 183-185, Arg-195, Lys-222, His-232, and 271-273 contribute to the substrate site; these read TIRQY, TIQ, and RLS. Positions 579 to 709 constitute a B12-binding domain; sequence RPRMLVVKMG…ILDLIREARS (131 aa). His-592 is a binding site for adenosylcob(III)alamin.

It belongs to the methylmalonyl-CoA mutase family. As to quaternary structure, homodimer. It depends on adenosylcob(III)alamin as a cofactor.

The enzyme catalyses (R)-methylmalonyl-CoA = succinyl-CoA. The protein operates within metabolic intermediate metabolism; propanoyl-CoA degradation; succinyl-CoA from propanoyl-CoA: step 3/3. Its function is as follows. Radical enzyme that catalyzes the transformation of (2R)-methylmalonyl-CoA to succinyl-CoA. Is involved in the ethylmalonyl-CoA pathway for acetyl-CoA assimilation required for R.sphaeroides growth on acetate as sole carbon source. This is Methylmalonyl-CoA mutase from Cereibacter sphaeroides (strain ATCC 17023 / DSM 158 / JCM 6121 / CCUG 31486 / LMG 2827 / NBRC 12203 / NCIMB 8253 / ATH 2.4.1.) (Rhodobacter sphaeroides).